The following is a 549-amino-acid chain: Longitudinals lacking protein, isoforms H/M/V (549 aa).

A BTB domain is found at valine 32 to glutamine 97. Disordered regions lie at residues leucine 115–leucine 200 and serine 228–serine 340. 4 stretches are compositionally biased toward low complexity: residues serine 162–proline 175, serine 228–threonine 251, threonine 263–serine 293, and asparagine 329–serine 340.

In terms of tissue distribution, mostly neuronal.

The protein resides in the nucleus. Putative transcription factor required for axon growth and guidance in the central and peripheral nervous systems. Repels CNS axons away from the midline by promoting the expression of the midline repellent sli and its receptor robo. The sequence is that of Longitudinals lacking protein, isoforms H/M/V from Drosophila melanogaster (Fruit fly).